Consider the following 960-residue polypeptide: MEYAVTNMRLLSNMMYSASAISFPRVRLHCSIPTEPSCRRNPFRQSNQPVQVPSPKLACFDGVLTEAFQRLDVSENNSPVEAFAYVLELCGKRRAVSQGRQLHSRIFKTFPSFELDFLAGKLVFMYGKCGSLDDAEKVFDEMPDRTAFAWNTMIGAYVSNGEPASALALYWNMRVEGVPLGLSSFPALLKACAKLRDIRSGSELHSLLVKLGYHSTGFIVNALVSMYAKNDDLSAARRLFDGFQEKGDAVLWNSILSSYSTSGKSLETLELFREMHMTGPAPNSYTIVSALTACDGFSYAKLGKEIHASVLKSSTHSSELYVCNALIAMYTRCGKMPQAERILRQMNNADVVTWNSLIKGYVQNLMYKEALEFFSDMIAAGHKSDEVSMTSIIAASGRLSNLLAGMELHAYVIKHGWDSNLQVGNTLIDMYSKCNLTCYMGRAFLRMHDKDLISWTTVIAGYAQNDCHVEALELFRDVAKKRMEIDEMILGSILRASSVLKSMLIVKEIHCHILRKGLLDTVIQNELVDVYGKCRNMGYATRVFESIKGKDVVSWTSMISSSALNGNESEAVELFRRMVETGLSADSVALLCILSAAASLSALNKGREIHCYLLRKGFCLEGSIAVAVVDMYACCGDLQSAKAVFDRIERKGLLQYTSMINAYGMHGCGKAAVELFDKMRHENVSPDHISFLALLYACSHAGLLDEGRGFLKIMEHEYELEPWPEHYVCLVDMLGRANCVVEAFEFVKMMKTEPTAEVWCALLAACRSHSEKEIGEIAAQRLLELEPKNPGNLVLVSNVFAEQGRWNDVEKVRAKMKASGMEKHPGCSWIEMDGKVHKFTARDKSHPESKEIYEKLSEVTRKLEREVGYVADTKFVLHNVDEGEKVQMLHGHSERIAIAYGLLRTPDRACLRITKNLRVCRDCHTFCKLVSKLFRRDIVMRDANRFHHFESGLCSCGDSW.

The N-terminal 64 residues, 1 to 64, are a transit peptide targeting the chloroplast; the sequence is MEYAVTNMRL…PKLACFDGVL (64 aa). PPR repeat units lie at residues 79–109, 115–145, 146–180, 181–215, 216–246, 248–282, 283–317, 319–349, 350–384, 385–419, 420–450, 451–485, 486–516, 520–550, 551–585, 586–620, 621–651, 652–686, 687–717, and 723–753; these read PVEA…IFKT, LDFL…MPDR, TAFA…GVPL, GLSS…GYHS, TGFI…FQEK, DAVL…GPAP, NSYT…STHS, ELYV…MNNA, DVVT…GHKS, DEVS…GWDS, NLQV…MHDK, DLIS…RMEI, DEMI…ILRK, DTVI…IKGK, DVVS…GLSA, DSVA…GFCL, EGSI…IERK, GLLQ…NVSP, DHIS…MEHE, and WPEH…MKTE. A type E motif region spans residues 758-833; the sequence is VWCALLAACR…HPGCSWIEMD (76 aa). Residues 834–864 are type E(+) motif; sequence GKVHKFTARDKSHPESKEIYEKLSEVTRKLE. The segment at 865–960 is type DYW motif; it reads REVGYVADTK…SGLCSCGDSW (96 aa).

It belongs to the PPR family. PCMP-H subfamily.

The protein localises to the plastid. Its subcellular location is the chloroplast. Involved in RNA editing event in chloroplasts. Required for the editing of a single site in rps14 transcript. The protein is Pentatricopeptide repeat-containing protein At3g63370, chloroplastic (PCMP-H83) of Arabidopsis thaliana (Mouse-ear cress).